Here is a 416-residue protein sequence, read N- to C-terminus: Secreted RxLR effector protein 25 (416 aa).

The signal sequence occupies residues 1–20 (MRSWLLLLVGLSSYFALSTS). Residues 49-88 (RKLRAPGGDTNTLKDSGKARREKKVWKLFCRVFLQLDDEK) carry the RxLR-dEER motif.

It belongs to the RxLR effector family.

It is found in the secreted. Its subcellular location is the host cytoplasm. It localises to the host nucleus. Functionally, effector that partially suppresses the tobacco programmed cell death induced by cell death-inducing proteins. This is Secreted RxLR effector protein 25 from Plasmopara viticola (Downy mildew of grapevine).